Here is a 63-residue protein sequence, read N- to C-terminus: MKAQELREKSVEELNTELLNLLREQFNLRMQAASGQLQQTHLLKQVRRNVARVKTLLTEKAGA.

This sequence belongs to the universal ribosomal protein uL29 family.

The polypeptide is Large ribosomal subunit protein uL29 (Yersinia pseudotuberculosis serotype O:1b (strain IP 31758)).